The following is a 325-amino-acid chain: Inner membrane protein YrbG (325 aa).

Residues 1 to 5 (MLLAT) are Periplasmic-facing. The helical transmembrane segment at 6-26 (ALLIVGLLLVVYSADRLVFAA) threads the bilayer. Topologically, residues 27–37 (SILCRTFGIPP) are cytoplasmic. Residues 38 to 58 (LIIGMTVVSIGTSLPEVIVSL) traverse the membrane as a helical segment. Over 59–67 (AASLHEQRD) the chain is Periplasmic. The chain crosses the membrane as a helical span at residues 68 to 88 (LAVGTALGSNIINILLILGLA). Residues 89–104 (ALVRPFTVHSDVLRRE) are Cytoplasmic-facing. The chain crosses the membrane as a helical span at residues 105–125 (LPLMLLVSVVAGSVLYDGQLS). Residue Arg-126 is a topological domain, periplasmic. Residues 127-147 (SDGIFLLFLAVLWLLFIVKLA) traverse the membrane as a helical segment. Residues 148-169 (RQAERQGTDSLTREQLAELPRD) lie on the Cytoplasmic side of the membrane. Residues 170 to 190 (GGLPVAFLWLGIALIIMPVAT) form a helical membrane-spanning segment. At 191–198 (RMVVDNAT) the chain is on the periplasmic side. A helical transmembrane segment spans residues 199–219 (VLANYFAISELTMGLTAIAIG). Residues 220-243 (TSLPELATAIAGVRKGENDIAVGN) lie on the Cytoplasmic side of the membrane. A helical transmembrane segment spans residues 244 to 264 (IIGANIFNIVIVLGLPALITP). Residues 265–269 (GEIDP) lie on the Periplasmic side of the membrane. Residues 270–290 (LAYSRDYSVMLLVSIIFALLC) traverse the membrane as a helical segment. The Cytoplasmic segment spans residues 291–302 (WRRSPQPGRGVG). Residues 303–323 (VLLTGGFIVWLAMLYWLSPIL) traverse the membrane as a helical segment. The Periplasmic portion of the chain corresponds to 324-325 (VE).

It belongs to the Ca(2+):cation antiporter (CaCA) (TC 2.A.19) family.

It is found in the cell inner membrane. The protein is Inner membrane protein YrbG (yrbG) of Escherichia coli (strain K12).